The primary structure comprises 148 residues: Receptor activity-modifying protein 1 (148 aa).

The signal sequence occupies residues 1-26 (MAPGLRGLPRCGLWLLLAHHLFMVTA). 3 cysteine pairs are disulfide-bonded: Cys27-Cys82, Cys40-Cys72, and Cys57-Cys104. Residues 27–118 (CRDPDYGTLI…RALRDPPNSI (92 aa)) lie on the Extracellular side of the membrane. Residues 119–140 (LCPFIALPITVTLLMTALVVWR) traverse the membrane as a helical segment. Over 141–148 (SKRTEGIV) the chain is Cytoplasmic.

Belongs to the RAMP family. In terms of assembly, heterodimer of CALCRL and RAMP1; the interaction induces allosteric modulation of CALCRL function and CGRP1/CALCA and CGRP2/CALCB ligand specificity. Heterodimer of CALCR and RAMP1; interaction forms the AMYR1 receptor complex for amylin/IAPP and CGRP1/CALCA ligands. Expressed predominantly in the thymus, skeletal muscle, embryonic and adult brain, embryonic and adult lung, and colon.

It localises to the cell membrane. In terms of biological role, accessory protein that interacts with and modulates the function of G-protein coupled receptors including calcitonin gene-related peptide type 1 receptor (CALCRL) and calcitonin receptor (CALCR). Required for the transport of CALCRL to the plasma membrane. Together with CALCRL, form the receptor complex for the calcitonin gene-related peptides CGRP1/CALCA and CGRP2/CALCB. Together with CALCR, form the AMYR1 receptor complex for amylin/IAPP and CGRP1/CALCA. In Mus musculus (Mouse), this protein is Receptor activity-modifying protein 1.